Reading from the N-terminus, the 898-residue chain is Serine/threonine-protein kinase TAO3 (898 aa).

Residues 24 to 277 enclose the Protein kinase domain; sequence FIDLHEIGHG…AVELLRHDFI (254 aa). Residues 30-38 and Lys53 contribute to the ATP site; that span reads IGHGSFGAV. The active-site Proton acceptor is the Asp147. Disordered regions lie at residues 316–375 and 405–424; these read TRNG…DESS and DEAG…SVQS. The residue at position 324 (Ser324) is a Phosphoserine; by ATM. Phosphoserine occurs at positions 343, 346, and 349. Over residues 349 to 366 the composition is skewed to low complexity; that stretch reads SIPSTSVSTGSRSSSVNS. Residue Thr357 is modified to Phosphothreonine. A Phosphoserine modification is found at Ser359. Over residues 405-416 the composition is skewed to basic and acidic residues; the sequence is DEAGHGDPRPEP. Ser442 carries the phosphoserine modification. Coiled coils occupy residues 452–502, 548–649, and 754–871; these read EQEN…THAN, FLES…HAML, and LKTL…QERE. Residues 565-596 form a disordered region; it reads EEMNEDHSTPKKEKQERISKHKENLQHTQAEE. Lys830 bears the N6-acetyllysine mark.

This sequence belongs to the protein kinase superfamily. STE Ser/Thr protein kinase family. STE20 subfamily. Self-associates. Interacts with ERN1 and TRAF2. Interaction with TRAF2 is facilitated under ER stress conditions, such as treatment with tunicamycin, and may promote TRAF2 phosphorylation. Interacts (via N-terminus) with STK25; the interaction promotes STK25 abundance at the level of protein expression and/or stability. In terms of processing, autophosphorylated. Phosphorylation at Ser-324 by ATM following DNA damage is required for activation of the p38/MAPK14 stress-activated MAPK cascade. Phosphorylated at Ser-324 and on Tyr residues during T cell activation. Phosphorylated by LRRK2.

It localises to the cytoplasm. Its subcellular location is the cell membrane. It is found in the membrane raft. The protein localises to the lipid droplet. The enzyme catalyses L-seryl-[protein] + ATP = O-phospho-L-seryl-[protein] + ADP + H(+). It catalyses the reaction L-threonyl-[protein] + ATP = O-phospho-L-threonyl-[protein] + ADP + H(+). Its function is as follows. Serine/threonine-protein kinase that acts as a regulator of the p38/MAPK14 stress-activated MAPK cascade and of the MAPK8/JNK cascade. In response to DNA damage, involved in the G2/M transition DNA damage checkpoint by activating the p38/MAPK14 stress-activated MAPK cascade, probably by mediating phosphorylation of upstream MAP2K3 and MAP2K6 kinases. Inhibits basal activity of the MAPK8/JNK cascade and diminishes its activation in response to epidermal growth factor (EGF). Positively regulates canonical T cell receptor (TCR) signaling by preventing early PTPN6/SHP1-mediated inactivation of LCK, ensuring sustained TCR signaling that is required for optimal activation and differentiation of T cells. Phosphorylates PTPN6/SHP1 on 'Thr-394', leading to its polyubiquitination and subsequent proteasomal degradation. Required for cell surface expression of metalloprotease ADAM10 on type 1 transitional B cells which is necessary for their NOTCH-mediated development into marginal zone B cells. Also required for the NOTCH-mediated terminal differentiation of splenic conventional type 2 dendritic cells. Positively regulates osteoblast differentiation by acting as an upstream activator of the JNK pathway. Promotes JNK signaling in hepatocytes and positively regulates hepatocyte lipid storage by inhibiting beta-oxidation and triacylglycerol secretion while enhancing lipid synthesis. Restricts age-associated inflammation by negatively regulating differentiation of macrophages and their production of pro-inflammatory cytokines. Plays a role in negatively regulating the abundance of regulatory T cells in white adipose tissue. The protein is Serine/threonine-protein kinase TAO3 (Taok3) of Mus musculus (Mouse).